Consider the following 392-residue polypeptide: Chorismate synthase (392 aa).

R40 and R46 together coordinate NADP(+). Residues 129–131, 257–258, G302, 317–321, and R343 each bind FMN; these read RSS, QA, and KPIAT.

It belongs to the chorismate synthase family. In terms of assembly, homotetramer. FMNH2 serves as cofactor.

It catalyses the reaction 5-O-(1-carboxyvinyl)-3-phosphoshikimate = chorismate + phosphate. The protein operates within metabolic intermediate biosynthesis; chorismate biosynthesis; chorismate from D-erythrose 4-phosphate and phosphoenolpyruvate: step 7/7. Catalyzes the anti-1,4-elimination of the C-3 phosphate and the C-6 proR hydrogen from 5-enolpyruvylshikimate-3-phosphate (EPSP) to yield chorismate, which is the branch point compound that serves as the starting substrate for the three terminal pathways of aromatic amino acid biosynthesis. This reaction introduces a second double bond into the aromatic ring system. This Chloroherpeton thalassium (strain ATCC 35110 / GB-78) protein is Chorismate synthase.